Here is a 257-residue protein sequence, read N- to C-terminus: Acetylglutamate kinase (257 aa).

Substrate contacts are provided by residues 43 to 44 (GG), Arg-65, and Asn-157. Residues 180–185 (DVSGIL) and 208–210 (IIT) contribute to the ATP site.

This sequence belongs to the acetylglutamate kinase family. ArgB subfamily. In terms of assembly, homodimer.

The protein localises to the cytoplasm. It catalyses the reaction N-acetyl-L-glutamate + ATP = N-acetyl-L-glutamyl 5-phosphate + ADP. It participates in amino-acid biosynthesis; L-arginine biosynthesis; N(2)-acetyl-L-ornithine from L-glutamate: step 2/4. Functionally, catalyzes the ATP-dependent phosphorylation of N-acetyl-L-glutamate. The protein is Acetylglutamate kinase of Pectobacterium atrosepticum (strain SCRI 1043 / ATCC BAA-672) (Erwinia carotovora subsp. atroseptica).